Here is a 204-residue protein sequence, read N- to C-terminus: Small ribosomal subunit protein uS4 (204 aa).

Positions 1–49 (MSKRKSAKYKLDRRMGENIWGRPNSPVNKRSYGPGQHGQRRKGKTSDFG) are disordered. The S4 RNA-binding domain occupies 94 to 154 (QRLDMVVYRA…NKAKEMALVI (61 aa)).

It belongs to the universal ribosomal protein uS4 family. In terms of assembly, part of the 30S ribosomal subunit. Contacts protein S5. The interaction surface between S4 and S5 is involved in control of translational fidelity.

Its function is as follows. One of the primary rRNA binding proteins, it binds directly to 16S rRNA where it nucleates assembly of the body of the 30S subunit. With S5 and S12 plays an important role in translational accuracy. The protein is Small ribosomal subunit protein uS4 of Erythrobacter litoralis (strain HTCC2594).